The following is a 124-amino-acid chain: Small ribosomal subunit protein uS13 (124 aa).

The segment at 99–124 (RGQRTRTNARTRKGPRKTVGVMRKKS) is disordered. A compositionally biased stretch (basic residues) spans 101-124 (QRTRTNARTRKGPRKTVGVMRKKS).

It belongs to the universal ribosomal protein uS13 family. Part of the 30S ribosomal subunit. Forms a loose heterodimer with protein S19. Forms two bridges to the 50S subunit in the 70S ribosome.

Functionally, located at the top of the head of the 30S subunit, it contacts several helices of the 16S rRNA. In the 70S ribosome it contacts the 23S rRNA (bridge B1a) and protein L5 of the 50S subunit (bridge B1b), connecting the 2 subunits; these bridges are implicated in subunit movement. Contacts the tRNAs in the A and P-sites. The chain is Small ribosomal subunit protein uS13 from Caldicellulosiruptor saccharolyticus (strain ATCC 43494 / DSM 8903 / Tp8T 6331).